Reading from the N-terminus, the 170-residue chain is Methanogen homoaconitase small subunit (170 aa).

Residues 26–29 (YLRT) carry the YLRT motif.

It belongs to the LeuD family. LeuD type 2 subfamily. As to quaternary structure, heterotetramer of 2 HacA and 2 HacB proteins.

The catalysed reaction is (2R)-homocitrate = (2R,3S)-homoisocitrate. It catalyses the reaction (2R)-homocitrate = cis-homoaconitate + H2O. It carries out the reaction (2R,3S)-homoisocitrate = cis-homoaconitate + H2O. The enzyme catalyses cis-(homo)2aconitate + H2O = (2R,3S)-iso(homo)2citrate. The catalysed reaction is cis-(homo)3aconitate + H2O = (2R,3S)-iso(homo)3citrate. It functions in the pathway organic acid metabolism; 2-oxosuberate biosynthesis. Functionally, component of a hydro-lyase with broad substrate specificity for cis-unsaturated tricarboxylic acids. Catalyzes both the reversible dehydration of (R)-homocitrate ((R)-2-hydroxybutane-1,2,4-tricarboxylate) to produce cis-homoaconitate ((Z)-but-1-ene-1,2,4-tricarboxylate), and its hydration to homoisocitrate ((1R,2S)-1-hydroxybutane-1,2,4-tricarboxylate). Is also able to hydrate the analogous longer chain substrates cis-homo(2)-aconitate, cis-homo(3)-aconitate. These reactions are part of the biosynthesis pathway of coenzyme B. The sequence is that of Methanogen homoaconitase small subunit (hacB) from Methanothermobacter thermautotrophicus (strain ATCC 29096 / DSM 1053 / JCM 10044 / NBRC 100330 / Delta H) (Methanobacterium thermoautotrophicum).